Reading from the N-terminus, the 477-residue chain is Bifunctional protein HldE (477 aa).

The ribokinase stretch occupies residues 1–318 (MKVTLPEFER…ENAVRGRADT (318 aa)). Lysine 179 bears the N6-acetyllysine mark. 195–198 (NLSE) lines the ATP pocket. Aspartate 264 is a catalytic residue. The tract at residues 344–477 (MTNGVFDILH…IKKIQQDKKG (134 aa)) is cytidylyltransferase.

It in the N-terminal section; belongs to the carbohydrate kinase PfkB family. In the C-terminal section; belongs to the cytidylyltransferase family. In terms of assembly, homodimer.

It catalyses the reaction D-glycero-beta-D-manno-heptose 7-phosphate + ATP = D-glycero-beta-D-manno-heptose 1,7-bisphosphate + ADP + H(+). It carries out the reaction D-glycero-beta-D-manno-heptose 1-phosphate + ATP + H(+) = ADP-D-glycero-beta-D-manno-heptose + diphosphate. The protein operates within nucleotide-sugar biosynthesis; ADP-L-glycero-beta-D-manno-heptose biosynthesis; ADP-L-glycero-beta-D-manno-heptose from D-glycero-beta-D-manno-heptose 7-phosphate: step 1/4. It functions in the pathway nucleotide-sugar biosynthesis; ADP-L-glycero-beta-D-manno-heptose biosynthesis; ADP-L-glycero-beta-D-manno-heptose from D-glycero-beta-D-manno-heptose 7-phosphate: step 3/4. In terms of biological role, catalyzes the phosphorylation of D-glycero-D-manno-heptose 7-phosphate at the C-1 position to selectively form D-glycero-beta-D-manno-heptose-1,7-bisphosphate. Functionally, catalyzes the ADP transfer from ATP to D-glycero-beta-D-manno-heptose 1-phosphate, yielding ADP-D-glycero-beta-D-manno-heptose. In Escherichia coli (strain 55989 / EAEC), this protein is Bifunctional protein HldE.